We begin with the raw amino-acid sequence, 310 residues long: Cell division protein FtsQ (310 aa).

The tract at residues 1–57 is disordered; that stretch reads MSEPENTAEDKDAEAAISADAVESETTADGGENPAEGESAEGPRMRARRERMERREA. The Cytoplasmic portion of the chain corresponds to 1 to 95; that stretch reads MSEPENTAED…AGRGKVQGLQ (95 aa). Residues 96-116 traverse the membrane as a helical segment; it reads TLLLVVLLALIAVGLGSILYF. Residues 117 to 310 are Extracellular-facing; that stretch reads TPLMSVRQTV…VSSPDLPTVK (194 aa). The 69-residue stretch at 120 to 188 folds into the POTRA domain; the sequence is MSVRQTVVTG…STLRVTIVER (69 aa).

The protein belongs to the FtsQ/DivIB family. FtsQ subfamily.

It is found in the cell membrane. Its function is as follows. Essential cell division protein. The polypeptide is Cell division protein FtsQ (Mycobacteroides abscessus (strain ATCC 19977 / DSM 44196 / CCUG 20993 / CIP 104536 / JCM 13569 / NCTC 13031 / TMC 1543 / L948) (Mycobacterium abscessus)).